A 182-amino-acid chain; its full sequence is RNA chaperone ProQ (182 aa).

Positions 125-160 (EQRKEQRKDFFKKKAREERNAKTMNKAVKKGSPKKD) are disordered.

It belongs to the ProQ family.

Its subcellular location is the cytoplasm. Its function is as follows. RNA chaperone with significant RNA binding, RNA strand exchange and RNA duplexing activities. The chain is RNA chaperone ProQ from Haemophilus ducreyi (strain 35000HP / ATCC 700724).